A 307-amino-acid polypeptide reads, in one-letter code: UDP-N-acetylenolpyruvoylglucosamine reductase (307 aa).

One can recognise an FAD-binding PCMH-type domain in the interval 33–198 (KVGGPADIFV…LNATFALQKG (166 aa)). Arg-177 is a catalytic residue. The active-site Proton donor is the Ser-227. The active site involves Glu-297.

It belongs to the MurB family. FAD serves as cofactor.

The protein localises to the cytoplasm. It carries out the reaction UDP-N-acetyl-alpha-D-muramate + NADP(+) = UDP-N-acetyl-3-O-(1-carboxyvinyl)-alpha-D-glucosamine + NADPH + H(+). It participates in cell wall biogenesis; peptidoglycan biosynthesis. Its function is as follows. Cell wall formation. This chain is UDP-N-acetylenolpyruvoylglucosamine reductase, found in Clostridium novyi (strain NT).